We begin with the raw amino-acid sequence, 862 residues long: AP-1 complex subunit gamma-2 (862 aa).

HEAT repeat units lie at residues 1–28 (MNPFSSGTRLSDMIRAIRASKTAAEERA), 29–65 (VVRKECAAIRASINENDQDYRHRDLAKLMFIHMLGYP), 101–136 (EVLMLVTNSLKQDLNHTNQYIVGLALCALGNICSAE), 137–173 (MARDLAPEVERLLQFRDPNIRKKAALCAIRIIRKVPD), 308–345 (GLRVLAINILGKFLSNRDNNIRYVALNMLMRSLTVDSQ), 346–382 (AVQRHRATILECVKDSDASIQKRALELIYLLVNENNV), 384–417 (PLAKELIEYLEVSEQDFKGDLTAKICSIVEKFAP), 418–454 (EKIWYIDQMLKVLSEAGTYVKEDVWHALIVVITNAPD), 458–496 (YTVRALYRALHTSFEQETLVRVAIWCIGEYADLLVNNAG), 507–545 (TESDAVDVVENAIKHHLSDVTTKAMALIALLKISSRFPS), and 560–599 (SFVLELQQRSLEFSSVIQKHQNIRSSLVERMPVLDEATFS). One can recognise a GAE domain in the interval 744–859 (AAYPSIVAFE…LEEGQINNFP (116 aa)).

Belongs to the adaptor complexes large subunit family. Adaptor protein complex 1 (AP-1) is a heterotetramer composed of two large adaptins (gamma-type subunit and beta-type subunit), a medium adaptin (mu-type subunit) and a small adaptin (sigma-type subunit).

It is found in the golgi apparatus. It localises to the cytoplasmic vesicle. The protein resides in the clathrin-coated vesicle membrane. In terms of biological role, subunit of clathrin-associated adaptor protein complex 1 that plays a role in protein sorting at the trans-Golgi network and early endosomes (TGN/EE). The AP complexes mediate both the recruitment of clathrin to membranes and the recognition of sorting signals within the cytosolic tails of transmembrane cargo molecules. This chain is AP-1 complex subunit gamma-2, found in Arabidopsis thaliana (Mouse-ear cress).